An 842-amino-acid chain; its full sequence is Glycogen phosphorylase, muscle form (842 aa).

Residue S2 is modified to N-acetylserine. S15 bears the Phosphoserine; by PHK; in form phosphorylase A mark. Residues D43 and Y76 each coordinate AMP. Y204 and Y227 each carry phosphotyrosine. Residue 310 to 319 coordinates AMP; sequence RRFKSSKFGC. S430 carries the phosphoserine modification. Y473 bears the Phosphotyrosine mark. The residue at position 681 (K681) is an N6-(pyridoxal phosphate)lysine. S747 and S748 each carry phosphoserine.

The protein belongs to the glycogen phosphorylase family. Homodimer. Homotetramer; to form the enzymatically active phosphorylase A. Pyridoxal 5'-phosphate serves as cofactor. In terms of processing, phosphorylation of Ser-15 converts phosphorylase B (unphosphorylated) to phosphorylase A.

It carries out the reaction [(1-&gt;4)-alpha-D-glucosyl](n) + phosphate = [(1-&gt;4)-alpha-D-glucosyl](n-1) + alpha-D-glucose 1-phosphate. Allosterically regulated through the non-covalent binding of metabolites, being activated by AMP and inhibited by ATP, ADP, and glucose-6-phosphate. The activity is also controlled by post-translational modifications including phosphorylation. Its function is as follows. Allosteric enzyme that catalyzes the rate-limiting step in glycogen catabolism, the phosphorolytic cleavage of glycogen to produce glucose-1-phosphate, and plays a central role in maintaining cellular and organismal glucose homeostasis. This chain is Glycogen phosphorylase, muscle form, found in Bos taurus (Bovine).